Reading from the N-terminus, the 249-residue chain is uncharacterized protein (249 aa).

It is found in the cytoplasm. The protein localises to the nucleus. This is an uncharacterized protein from Schizosaccharomyces pombe (strain 972 / ATCC 24843) (Fission yeast).